The sequence spans 387 residues: MSHRKYEAPRHGHLGFLPRKRAASIRGRVKAFPKDDKSKPVALTSFLGYKAGMTTIVRDLDRPGSKFHKREIVEAVSVVDTPPMVVVGVVGYIETPRGLRSLTTVWAEHLSDEIKRRFYKNWYKSKKKAFTKYSAKYAQDGAAIERELARIKKYASVVRVLAHTQVRKTPLVQKKAHLAEIQLNGGSVSEKVDWAREHFEKTVSVDSVFEQNEMIDVIAVTKGHGFEGVTHRWGTKKLPRKTHRGLRKVACIGAWHPAHVMWTVARAGQNGYHHRTSINHKVYRIGKGGDEGNAATEFDRTKKTITPMGGFVHYGAVNNDFVMVKGSIPGTRKRVVTLRKSLYTSTSRRALEEVNLKWIDTASKFGKGRFQTPAEKHAFMGTLKKDL.

This sequence belongs to the universal ribosomal protein uL3 family.

The protein localises to the cytoplasm. The chain is Large ribosomal subunit protein uL3 (RPL3) from Eremothecium gossypii (strain ATCC 10895 / CBS 109.51 / FGSC 9923 / NRRL Y-1056) (Yeast).